The sequence spans 344 residues: Phenylalanine--tRNA ligase alpha subunit (344 aa).

Glutamate 258 contributes to the Mg(2+) binding site.

This sequence belongs to the class-II aminoacyl-tRNA synthetase family. Phe-tRNA synthetase alpha subunit type 1 subfamily. Tetramer of two alpha and two beta subunits. Requires Mg(2+) as cofactor.

It is found in the cytoplasm. It carries out the reaction tRNA(Phe) + L-phenylalanine + ATP = L-phenylalanyl-tRNA(Phe) + AMP + diphosphate + H(+). The sequence is that of Phenylalanine--tRNA ligase alpha subunit from Thiobacillus denitrificans (strain ATCC 25259 / T1).